The chain runs to 261 residues: MALNKNHSEGGGVIVNNTESILMSYDHVELTFNDMKNVPEAFKGTKKGTVYLTPYRVIFLSKGKDAMQSFMMPFYLMKDCEIKQPVFGANFIKGIVKAEAGGGWEGSASYKLTFTAGGAIEFGQRMLQVASQASRGEVPNGAYGYPYMPSGAYVFPPPVANGMYPCPPGYPYPPPPPEFYPGPPMMDGAMGYVQPPPPPYPGPMEPPVSGPSAPATPAAEAKAAEAAASAYYNPGNPHNVYMPTSQPPPPPYYPPEDKKTQ.

The GRAM domain maps to 1–84 (MALNKNHSEG…YLMKDCEIKQ (84 aa)). Tyr192 is modified (phosphotyrosine). The PPxY motif 1 signature appears at 196–200 (PPPPY). The span at 196 to 209 (PPPPYPGPMEPPVS) shows a compositional bias: pro residues. A disordered region spans residues 196–261 (PPPPYPGPME…YYPPEDKKTQ (66 aa)). Low complexity predominate over residues 210 to 230 (GPSAPATPAAEAKAAEAAASA). Tyr231 is subject to Phosphotyrosine. The span at 245-254 (SQPPPPPYYP) shows a compositional bias: pro residues. Positions 248-252 (PPPPY) match the PPxY motif 2 motif.

In terms of assembly, binds to the WW domain of YAP1, WWP1 and WWP2. Interacts with NEDD4. Interacts with ESR1 and UBE3A. Phosphorylated in repsonse to EGF as well as estrogen and progesterone hormones. Tyr-192 and Tyr-231 are phosphorylated by YES and SRC inducing nuclear translocation. Expressed in the ear and the eye. Isoform 1 is expressed in brain, inner ear and organ of Corti. Isoform 2 is only detected in brain.

It localises to the cytoplasm. The protein localises to the nucleus. Functionally, acts as a transcriptional coactivator of estrogen and progesterone receptors (ESR1 and PGR) upon hormone activation. In presence of estrogen, binds to ESR1-responsive promoters. Synergizes with YAP1 to enhance PGR activity. Modulates expression of post-synaptic scaffolding proteins via regulation of ESR1, ESR2 and PGR. In Mus musculus (Mouse), this protein is WW domain-binding protein 2 (Wbp2).